The chain runs to 463 residues: Ribulose bisphosphate carboxylase large chain (463 aa).

N6,N6,N6-trimethyllysine is present on Lys-5. Substrate contacts are provided by Asn-114 and Thr-164. The Proton acceptor role is filled by Lys-166. Lys-168 contacts substrate. Lys-192, Asp-194, and Glu-195 together coordinate Mg(2+). Position 192 is an N6-carboxylysine (Lys-192). The active-site Proton acceptor is His-285. The substrate site is built by Arg-286, His-318, and Ser-370.

This sequence belongs to the RuBisCO large chain family. Type I subfamily. As to quaternary structure, heterohexadecamer of 8 large chains and 8 small chains; disulfide-linked. The disulfide link is formed within the large subunit homodimers. Mg(2+) is required as a cofactor. The disulfide bond which can form in the large chain dimeric partners within the hexadecamer appears to be associated with oxidative stress and protein turnover.

The protein localises to the plastid. Its subcellular location is the chloroplast. The enzyme catalyses 2 (2R)-3-phosphoglycerate + 2 H(+) = D-ribulose 1,5-bisphosphate + CO2 + H2O. It catalyses the reaction D-ribulose 1,5-bisphosphate + O2 = 2-phosphoglycolate + (2R)-3-phosphoglycerate + 2 H(+). RuBisCO catalyzes two reactions: the carboxylation of D-ribulose 1,5-bisphosphate, the primary event in carbon dioxide fixation, as well as the oxidative fragmentation of the pentose substrate in the photorespiration process. Both reactions occur simultaneously and in competition at the same active site. This chain is Ribulose bisphosphate carboxylase large chain, found in Pelargonium grandiflorum (Geranium).